Consider the following 582-residue polypeptide: L-fucose isomerase (582 aa).

Residues Glu-333 and Asp-357 each act as proton acceptor in the active site. The Mn(2+) site is built by Glu-333, Asp-357, and His-520.

This sequence belongs to the L-fucose isomerase family. Mn(2+) is required as a cofactor.

The protein resides in the cytoplasm. The catalysed reaction is L-fucose = L-fuculose. The protein operates within carbohydrate degradation; L-fucose degradation; L-lactaldehyde and glycerone phosphate from L-fucose: step 1/3. Converts the aldose L-fucose into the corresponding ketose L-fuculose. This chain is L-fucose isomerase, found in Vibrio vulnificus (strain YJ016).